A 482-amino-acid polypeptide reads, in one-letter code: Altronate oxidoreductase (482 aa).

Position 18–29 (18–29) interacts with NAD(+); sequence IIQFGEGNFLRA.

This sequence belongs to the mannitol dehydrogenase family. UxaB subfamily.

It carries out the reaction D-altronate + NAD(+) = keto-D-tagaturonate + NADH + H(+). It functions in the pathway carbohydrate metabolism; pentose and glucuronate interconversion. This chain is Altronate oxidoreductase, found in Shigella sonnei (strain Ss046).